A 406-amino-acid chain; its full sequence is 11-beta-hydroxysteroid dehydrogenase type 2 (406 aa).

Residue threonine 82–alanine 111 coordinates NAD(+). Serine 219 is a binding site for substrate. The active-site Proton acceptor is tyrosine 232. Residues glycine 379–arginine 406 form a disordered region.

Belongs to the short-chain dehydrogenases/reductases (SDR) family. As to quaternary structure, interacts with ligand-free cytoplasmic NR3C2. In terms of tissue distribution, highly expressed in the kidney.

It localises to the microsome. Its subcellular location is the endoplasmic reticulum. It carries out the reaction an 11beta-hydroxysteroid + NAD(+) = an 11-oxosteroid + NADH + H(+). The enzyme catalyses corticosterone + NAD(+) = 11-dehydrocorticosterone + NADH + H(+). The catalysed reaction is cortisol + NAD(+) = cortisone + NADH + H(+). It catalyses the reaction 11beta,17beta-dihydroxyandrost-4-ene-3-one + NAD(+) = 17beta-hydroxyandrost-4-ene-3,11-dione + NADH + H(+). It carries out the reaction 11beta-hydroxyandrost-4-ene-3,17-dione + NAD(+) = androst-4-ene-3,11,17-trione + NADH + H(+). Its pathway is steroid metabolism. With respect to regulation, inhibited by carbenoloxone. Functionally, catalyzes the conversion of biologically active 11beta-hydroxyglucocorticoids (11beta-hydroxysteroid) such as corticosterone, to inactive 11-ketoglucocorticoids (11-oxosteroid) such as 11-dehydrocorticosterone, in the presence of NAD(+). Functions as a dehydrogenase (oxidase), thereby decreasing the concentration of active glucocorticoids, thus protecting the nonselective mineralocorticoid receptor from occupation by glucocorticoids. Plays an important role in maintaining glucocorticoids balance during preimplantation and protects the fetus from excessive maternal corticosterone exposure. Catalyzes the oxidation of 11beta-hydroxytestosterone (11beta,17beta-dihydroxyandrost-4-ene-3-one) to 11-ketotestosterone (17beta-hydroxyandrost-4-ene-3,11-dione), a major bioactive androgen. Catalyzes the conversion of 11beta-hydroxyandrostenedione (11beta-hydroxyandrost-4-ene-3,17-dione) to 11-ketoandrostenedione (androst-4-ene-3,11,17-trione), which can be further metabolized to 11-ketotestosterone. Converts 7-beta-25-dihydroxycholesterol to 7-oxo-25-hydroxycholesterol in vitro. 7-beta-25-dihydroxycholesterol (not 7-oxo-25-hydroxycholesterol) acts as a ligand for the G-protein-coupled receptor (GPCR) Epstein-Barr virus-induced gene 2 (EBI2) and may thereby regulate immune cell migration. May protect ovulating oocytes and fertilizing spermatozoa from the adverse effects of cortisol. The polypeptide is 11-beta-hydroxysteroid dehydrogenase type 2 (HSD11B2) (Oryctolagus cuniculus (Rabbit)).